The chain runs to 320 residues: Ferrochelatase (320 aa).

Fe cation-binding residues include His194 and Glu275.

It belongs to the ferrochelatase family. In terms of assembly, monomer.

It is found in the cytoplasm. It carries out the reaction heme b + 2 H(+) = protoporphyrin IX + Fe(2+). It participates in porphyrin-containing compound metabolism; protoheme biosynthesis; protoheme from protoporphyrin-IX: step 1/1. In terms of biological role, catalyzes the ferrous insertion into protoporphyrin IX. The protein is Ferrochelatase of Salmonella paratyphi A (strain ATCC 9150 / SARB42).